A 525-amino-acid chain; its full sequence is Squalene epoxidase 3 (525 aa).

Residues 9-29 (HCILTTTFVASLFAFLLLYVL) traverse the membrane as a helical segment. FAD contacts are provided by residues 64–65 (VA), 84–85 (ER), Arg-92, Arg-163, Val-179, Asp-341, and Met-354. The next 2 membrane-spanning stretches (helical) occupy residues 452 to 472 (LVLH…VPLP) and 477 to 497 (LWLG…IIKA).

This sequence belongs to the squalene monooxygenase family. FAD is required as a cofactor. As to expression, expressed in seedlings, leaves, stems, inflorescences and siliques.

Its subcellular location is the membrane. The enzyme catalyses squalene + reduced [NADPH--hemoprotein reductase] + O2 = (S)-2,3-epoxysqualene + oxidized [NADPH--hemoprotein reductase] + H2O + H(+). It functions in the pathway terpene metabolism; lanosterol biosynthesis; lanosterol from farnesyl diphosphate: step 2/3. Its function is as follows. Catalyzes the stereospecific oxidation of squalene to (S)-2,3-epoxysqualene, and is considered to be a rate-limiting enzyme in steroid biosynthesis. Can produce not only oxidosqualene, but also 2,3:22,23-dioxidosqualene. This is Squalene epoxidase 3 (SQE3) from Arabidopsis thaliana (Mouse-ear cress).